The following is a 112-amino-acid chain: ATP-dependent Clp protease adapter protein ClpS (112 aa).

Belongs to the ClpS family. In terms of assembly, binds to the N-terminal domain of the chaperone ClpA.

Functionally, involved in the modulation of the specificity of the ClpAP-mediated ATP-dependent protein degradation. The sequence is that of ATP-dependent Clp protease adapter protein ClpS from Rhodococcus jostii (strain RHA1).